Reading from the N-terminus, the 485-residue chain is MIARTKIICTIGPATNTPEMLEKLLDAGMNVARLNFSHGTHESHGRTIAILKELREKRQVPLAIMLDTKGPEIRLGQVESPIKVQPGDRLTLVSKEILGSKESGVTLYPSCVFPYVRERAPVLIDDGYIQAVVVNAQEHMVEIEFQNSGEIKSNKSLSIKDIDVALPFMTEKDIADLKFGVEQELDLIAASFVRCNEDIDSMRKVLESFGRPNMPIIAKIENHLGVQNFQEIARAADGIMIARGDLGIELSIVEVPGLQKFMARASRETGRFCITATQMLESMIRNPLPTRAEVSDVANAIYDGTSAVMLSGETALGAHPVHAVKTMRSIIQETEKTFDYHAFFQLNDKNSALKVSPYLEAIGFSGIQIAEKASAKAIIVYTQTGGSPMFLSKYRPYLPIIAVTPNRNVYYRLAVEWGVYPMLTLESNRTVWRHQACVYGVEKGILSNYDKILVFSRGAGMQDTNNLTLTTVHDVLSPSLDEIVP.

Residue Arg33 coordinates substrate. Asn35, Ser37, Asp67, and Thr68 together coordinate K(+). 35–38 (NFSH) contacts ATP. Arg74 and Lys155 together coordinate ATP. Glu221 serves as a coordination point for Mg(2+). Substrate is bound by residues Gly244, Asp245, and Thr277. Asp245 provides a ligand contact to Mg(2+).

The protein belongs to the pyruvate kinase family. In terms of assembly, homotetramer. It depends on Mg(2+) as a cofactor. Requires K(+) as cofactor.

The catalysed reaction is pyruvate + ATP = phosphoenolpyruvate + ADP + H(+). Its pathway is carbohydrate degradation; glycolysis; pyruvate from D-glyceraldehyde 3-phosphate: step 5/5. In Chlamydia trachomatis serovar D (strain ATCC VR-885 / DSM 19411 / UW-3/Cx), this protein is Pyruvate kinase (pyk).